A 197-amino-acid chain; its full sequence is Glycerol-3-phosphate acyltransferase (197 aa).

A run of 5 helical transmembrane segments spans residues 7-27, 55-75, 78-98, 116-136, and 157-177; these read TLLPLVVGYVLGSVPFGLILT, GLAAATLLLDLGKGLAAVLIV, VWPGAEALAALAAVLGHCFPV, LALAWPIGLVYAVTWLGVLFL, and VLGYAPYVPVLALLALLVLYL.

The protein belongs to the PlsY family. Probably interacts with PlsX.

It localises to the cell inner membrane. The catalysed reaction is an acyl phosphate + sn-glycerol 3-phosphate = a 1-acyl-sn-glycero-3-phosphate + phosphate. Its pathway is lipid metabolism; phospholipid metabolism. Catalyzes the transfer of an acyl group from acyl-phosphate (acyl-PO(4)) to glycerol-3-phosphate (G3P) to form lysophosphatidic acid (LPA). This enzyme utilizes acyl-phosphate as fatty acyl donor, but not acyl-CoA or acyl-ACP. This Novosphingobium aromaticivorans (strain ATCC 700278 / DSM 12444 / CCUG 56034 / CIP 105152 / NBRC 16084 / F199) protein is Glycerol-3-phosphate acyltransferase.